A 216-amino-acid chain; its full sequence is Small ribosomal subunit protein uS3 (216 aa).

The 73-residue stretch at 39 to 111 (IYKFFDKLVR…DINLQVSLLK (73 aa)) folds into the KH type-2 domain.

The protein belongs to the universal ribosomal protein uS3 family. In terms of assembly, part of the 30S ribosomal subunit. Forms a tight complex with proteins S10 and S14.

In terms of biological role, binds the lower part of the 30S subunit head. Binds mRNA in the 70S ribosome, positioning it for translation. The protein is Small ribosomal subunit protein uS3 of Mycoplasmopsis agalactiae (strain NCTC 10123 / CIP 59.7 / PG2) (Mycoplasma agalactiae).